A 309-amino-acid chain; its full sequence is Oxygen-dependent coproporphyrinogen-III oxidase (309 aa).

Residue serine 94 participates in substrate binding. A divalent metal cation contacts are provided by histidine 98 and histidine 108. The Proton donor role is filled by histidine 108. 110-112 (NVR) contacts substrate. A divalent metal cation contacts are provided by histidine 147 and histidine 177. Residues 242 to 277 (YVEFNLVWDRGTLFGLQTGGRTESILMSLPPLVRWE) form an important for dimerization region. Substrate is bound at residue 260–262 (GGR).

Belongs to the aerobic coproporphyrinogen-III oxidase family. As to quaternary structure, homodimer. A divalent metal cation serves as cofactor.

It localises to the cytoplasm. The enzyme catalyses coproporphyrinogen III + O2 + 2 H(+) = protoporphyrinogen IX + 2 CO2 + 2 H2O. It functions in the pathway porphyrin-containing compound metabolism; protoporphyrin-IX biosynthesis; protoporphyrinogen-IX from coproporphyrinogen-III (O2 route): step 1/1. Functionally, involved in the heme biosynthesis. Catalyzes the aerobic oxidative decarboxylation of propionate groups of rings A and B of coproporphyrinogen-III to yield the vinyl groups in protoporphyrinogen-IX. This chain is Oxygen-dependent coproporphyrinogen-III oxidase, found in Yersinia pestis bv. Antiqua (strain Antiqua).